The chain runs to 100 residues: Small ribosomal subunit protein uS14c (100 aa).

Belongs to the universal ribosomal protein uS14 family. As to quaternary structure, part of the 30S ribosomal subunit.

The protein resides in the plastid. Its subcellular location is the chloroplast. In terms of biological role, binds 16S rRNA, required for the assembly of 30S particles. This Crucihimalaya wallichii (Rock-cress) protein is Small ribosomal subunit protein uS14c.